The following is a 469-amino-acid chain: Crinkler effector protein 1 (469 aa).

The first 17 residues, 1–17 (MSITLLCLIKGNTLANA), serve as a signal peptide directing secretion. Positions 18-57 (FPVDIDKDQLVGHLKKVIKAEQPQTFANVDAKDLKLWRVP) are LQLFLAK-like domain. The interval 58-96 (ISDDHDDQLRNLSLEDSDELLAIRKISKYFPDSPPEECI) is DWL domain. Asn68 carries N-linked (GlcNAc...) asparagine glycosylation. An HVLVXXP motif motif is present at residues 97–103 (HVLVEPP). Asn126, Asn181, and Asn248 each carry an N-linked (GlcNAc...) asparagine glycan.

It belongs to the Crinkler effector family. In terms of assembly, homodimer.

Its subcellular location is the secreted. The protein resides in the host nucleus. Functionally, effector that participates in the arbuscule development step of the symbiosis. Arbuscular mycorrhizal (AM) symbiosis is one of the most prominent and beneficial plant-microbe interactions that facilitates mineral nutrition and confers tolerance to biotic and abiotic stresses. Is not involved in cell death processes. This is Crinkler effector protein 1 from Rhizophagus irregularis (strain DAOM 181602 / DAOM 197198 / MUCL 43194) (Arbuscular mycorrhizal fungus).